Consider the following 546-residue polypeptide: Amidase FG08078 (546 aa).

Active-site charge relay system residues include lysine 129 and serine 204. The active-site Acyl-ester intermediate is the serine 228.

The protein belongs to the amidase family.

It functions in the pathway mycotoxin biosynthesis. Its function is as follows. Amidase; part of the gene cluster that mediates the biosynthesis of butenolide, a mycotoxin that shows antibiotic activity but does not seem to play a major role in the spread of head blight in wheat. Butenolide is derived from glutamic acid via a 4-acetamido-2-butenoic acid intermediate. The predicted function of the NADH:flavin oxidoreductase FG08077, the cytochrome P450 monooxygenase FG08079, the decarboxylase FG08083, and the putative acetyltransferase FG08082 are consistent with this pathway, however, the respective activities of the butelonide biosynthesis cluster enzymes have still to be experimentally determined. This is Amidase FG08078 from Gibberella zeae (strain ATCC MYA-4620 / CBS 123657 / FGSC 9075 / NRRL 31084 / PH-1) (Wheat head blight fungus).